The sequence spans 541 residues: 5' exonuclease Apollo (541 aa).

Residue lysine 334 forms a Glycyl lysine isopeptide (Lys-Gly) (interchain with G-Cter in SUMO2) linkage. A disordered region spans residues 455–475 (PLLSRGDSGSPARGNQSDCVG). A TBM motif is present at residues 492–507 (ESRGLALKYLLTPVHF).

The protein belongs to the DNA repair metallo-beta-lactamase (DRMBL) family. In terms of assembly, interacts with MUS81, MRE11 and FANCD2. Interacts with HSPA2, HSPA8 and HSPA14. Interacts with SPAG5. Interacts with TERF2; the interaction is direct. Post-translationally, ubiquitinated, leading to its degradation. Interaction with TERF2 protects it from ubiquitination.

Its subcellular location is the chromosome. It is found in the telomere. The protein resides in the nucleus. It localises to the cytoplasm. The protein localises to the cytoskeleton. Its subcellular location is the microtubule organizing center. It is found in the centrosome. The catalysed reaction is a beta-lactam + H2O = a substituted beta-amino acid. 5'-3' exonuclease that plays a central role in telomere maintenance and protection during S-phase. Participates in the protection of telomeres against non-homologous end-joining (NHEJ)-mediated repair, thereby ensuring that telomeres do not fuse. Plays a key role in telomeric loop (T loop) formation by being recruited by TERF2 at the leading end telomeres and by processing leading-end telomeres immediately after their replication via its exonuclease activity: generates 3' single-stranded overhang at the leading end telomeres avoiding blunt leading-end telomeres that are vulnerable to end-joining reactions and expose the telomere end in a manner that activates the DNA repair pathways. Together with TERF2, required to protect telomeres from replicative damage during replication by controlling the amount of DNA topoisomerase (TOP1, TOP2A and TOP2B) needed for telomere replication during fork passage and prevent aberrant telomere topology. Also involved in response to DNA damage: plays a role in response to DNA interstrand cross-links (ICLs) by facilitating double-strand break formation. In case of spindle stress, involved in prophase checkpoint. Possesses beta-lactamase activity, catalyzing the hydrolysis of penicillin G and nitrocefin. Exhibits no activity towards other beta-lactam antibiotic classes including cephalosporins (cefotaxime) and carbapenems (imipenem). The polypeptide is 5' exonuclease Apollo (Dclre1b) (Mus musculus (Mouse)).